We begin with the raw amino-acid sequence, 340 residues long: Guanine nucleotide-binding protein subunit beta-1 (340 aa).

7 WD repeats span residues glycine 53 to aspartate 83, leucine 95 to serine 125, glycine 141 to aspartate 170, glycine 182 to aspartate 212, glycine 224 to aspartate 254, asparagine 268 to aspartate 298, and glycine 310 to asparagine 340.

Belongs to the WD repeat G protein beta family. G proteins are composed of 3 units, alpha, beta and gamma. Interacts with G protein gamma subunits gpc-1 and gpc-2 and with egl-10 and eat-16. Interacts with goa-1 (in GDP-bound form).

In terms of biological role, guanine nucleotide-binding proteins (G proteins) are involved as a modulator or transducer in various transmembrane signaling systems. The beta and gamma chains are required for the GTPase activity, for replacement of GDP by GTP, and for G protein-effector interaction. In the early embryo, controls the magnitude of the forces acting on centrosomes but is not required for generating asymmetric forces. This is Guanine nucleotide-binding protein subunit beta-1 (gpb-1) from Caenorhabditis briggsae.